The chain runs to 118 residues: Large ribosomal subunit protein eL18 (118 aa).

It belongs to the eukaryotic ribosomal protein eL18 family.

This Nanoarchaeum equitans (strain Kin4-M) protein is Large ribosomal subunit protein eL18.